Consider the following 329-residue polypeptide: MTRTPVNVTVTGAAGQIGYALLFRIASGQLLGADVPVKLRLLEITPALKAAEGTAMELDDCAFPLLQGIDITDDPNVAFDGTNVGLLVGARPRTKGMERGDLLSANGGIFKPQGKAINDNAADDVKILVVGNPANTNALIAQAAAPDVPAERFTAMTRLDHNRALTQLAKKTGSTVADIKRLTIWGNHSATQYPDIFHASVAGKNAAEVVNDEKWLAEDFIPTVAKRGAAIIEARGASSAASAANAAIDHVYTWVNGTADGDWTSMGIPSDGSYGVPEGLISSFPVTTKDGRYEIVQGLEINEFSRARIDASVKELEEEREAVRALGLI.

NAD(+) is bound at residue 12-18 (GAAGQIG). Arg93 and Arg99 together coordinate substrate. NAD(+) is bound by residues Asn106, Gln113, and 130 to 132 (VGN). Asn132 and Arg163 together coordinate substrate. The active-site Proton acceptor is the His188.

This sequence belongs to the LDH/MDH superfamily. MDH type 2 family.

It carries out the reaction (S)-malate + NAD(+) = oxaloacetate + NADH + H(+). Strongly inhibited by Hg(2+) and Zn(2+). Activated by Na(+), NH(4)(+), Ca(2+), Cu(2+) and Mg(2+). Functionally, catalyzes the reversible oxidation of malate to oxaloacetate. Exhibits remarkably higher catalytic efficiency for oxaloacetate reduction than for malate oxidation in vitro. Highly specific for NAD(H). Can also use NADPH for oxaloacetate reduction, but catalytic efficiency is 97-fold higher with NADH. No activity detected with NADP(+) and malate. This Streptomyces avermitilis (strain ATCC 31267 / DSM 46492 / JCM 5070 / NBRC 14893 / NCIMB 12804 / NRRL 8165 / MA-4680) protein is Malate dehydrogenase.